A 354-amino-acid polypeptide reads, in one-letter code: Caffeate O-methyltransferase-like protein 2 (354 aa).

4 residues coordinate S-adenosyl-L-homocysteine: G198, D221, M242, and K255. H259 serves as the catalytic Proton acceptor. Active-site residues include E287 and E319.

It belongs to the class I-like SAM-binding methyltransferase superfamily. Cation-independent O-methyltransferase family. COMT subfamily.

In Oryza sativa subsp. japonica (Rice), this protein is Caffeate O-methyltransferase-like protein 2.